The sequence spans 380 residues: MTDYPIKYRLIKTEKHTGARLGEIITPHGTFPTPMFMPVGTQATVKTQSPEELKAIGSGIILSNTYHLWLRPGDELIARSGGLHKFMNWDQPILTDSGGFQVYSLADSRNITEEGVTFKNHLNGSKMFLSPEKAISIQNNLGSDIMMSFDECPQFYQPYDYVKKSIERTSRWAERGLKAHRRPHDQGLFGIVQGAGFEDLRRQSAADLVAMDFPGYSIGGLAVGESHEEMNAVLDFTTPLLPENKPRYLMGVGAPDSLIDGVIRGVDMFDCVLPTRIARNGTCMTSEGRLVIKNAKFAEDFTPLDHDCDCYTCQNYSRAYIRHLLKADETFGIRLTSYHNLYFLVNLMKKVRQAIMDDNLLEFRQDFLERYGYNKSNRNF.

The active-site Proton acceptor is the Asp96. Residues 96–100 (DSGGF), Asp150, Gln193, and Gly220 contribute to the substrate site. Residues 251–257 (GVGAPDS) form an RNA binding region. The active-site Nucleophile is Asp270. The RNA binding; important for wobble base 34 recognition stretch occupies residues 275–279 (TRIAR). Residues Cys308, Cys310, Cys313, and His339 each coordinate Zn(2+).

Belongs to the queuine tRNA-ribosyltransferase family. Homodimer. Within each dimer, one monomer is responsible for RNA recognition and catalysis, while the other monomer binds to the replacement base PreQ1. Zn(2+) is required as a cofactor.

It catalyses the reaction 7-aminomethyl-7-carbaguanine + guanosine(34) in tRNA = 7-aminomethyl-7-carbaguanosine(34) in tRNA + guanine. It functions in the pathway tRNA modification; tRNA-queuosine biosynthesis. Functionally, catalyzes the base-exchange of a guanine (G) residue with the queuine precursor 7-aminomethyl-7-deazaguanine (PreQ1) at position 34 (anticodon wobble position) in tRNAs with GU(N) anticodons (tRNA-Asp, -Asn, -His and -Tyr). Catalysis occurs through a double-displacement mechanism. The nucleophile active site attacks the C1' of nucleotide 34 to detach the guanine base from the RNA, forming a covalent enzyme-RNA intermediate. The proton acceptor active site deprotonates the incoming PreQ1, allowing a nucleophilic attack on the C1' of the ribose to form the product. After dissociation, two additional enzymatic reactions on the tRNA convert PreQ1 to queuine (Q), resulting in the hypermodified nucleoside queuosine (7-(((4,5-cis-dihydroxy-2-cyclopenten-1-yl)amino)methyl)-7-deazaguanosine). This chain is Queuine tRNA-ribosyltransferase, found in Streptococcus pyogenes serotype M3 (strain ATCC BAA-595 / MGAS315).